A 367-amino-acid polypeptide reads, in one-letter code: uncharacterized protein (367 aa).

This is an uncharacterized protein from Arabidopsis thaliana (Mouse-ear cress).